Consider the following 166-residue polypeptide: Large ribosomal subunit protein uL10 (166 aa).

Belongs to the universal ribosomal protein uL10 family. As to quaternary structure, part of the ribosomal stalk of the 50S ribosomal subunit. The N-terminus interacts with L11 and the large rRNA to form the base of the stalk. The C-terminus forms an elongated spine to which L12 dimers bind in a sequential fashion forming a multimeric L10(L12)X complex.

In terms of biological role, forms part of the ribosomal stalk, playing a central role in the interaction of the ribosome with GTP-bound translation factors. This chain is Large ribosomal subunit protein uL10, found in Bacillus cereus (strain 03BB102).